The sequence spans 184 residues: Peptidyl-tRNA hydrolase (184 aa).

Y13 is a binding site for tRNA. H18 acts as the Proton acceptor in catalysis. The tRNA site is built by F59, N61, and N105.

This sequence belongs to the PTH family. Monomer.

The protein localises to the cytoplasm. It carries out the reaction an N-acyl-L-alpha-aminoacyl-tRNA + H2O = an N-acyl-L-amino acid + a tRNA + H(+). In terms of biological role, hydrolyzes ribosome-free peptidyl-tRNAs (with 1 or more amino acids incorporated), which drop off the ribosome during protein synthesis, or as a result of ribosome stalling. Its function is as follows. Catalyzes the release of premature peptidyl moieties from peptidyl-tRNA molecules trapped in stalled 50S ribosomal subunits, and thus maintains levels of free tRNAs and 50S ribosomes. This chain is Peptidyl-tRNA hydrolase, found in Sulfurimonas denitrificans (strain ATCC 33889 / DSM 1251) (Thiomicrospira denitrificans (strain ATCC 33889 / DSM 1251)).